A 799-amino-acid chain; its full sequence is Zinc finger X-linked protein ZXDA (799 aa).

The segment at 1 to 89 (MEIPKLLPAR…QPSGGGDDFF (89 aa)) is disordered. Positions 13 to 26 (LQGGGGGGIPAGGG) are enriched in gly residues. C2H2-type zinc fingers lie at residues 267–291 (YLCP…LLTH), 300–324 (FKCP…LQSH), 330–354 (FGCP…MKGH), 360–382 (FKCE…QRSH), 389–413 (YQCA…NRAH), 420–444 (FSCS…LRSH), 450–474 (FLCD…KRKH), 480–504 (FMCP…SITH), 510–534 (FVCP…SKKH), and 543–568 (SRCP…VKRH). The tract at residues 267–573 (YLCPEALCGQ…MVKRHKVGQD (307 aa)) is required for interaction with ZXDC. The segment at 572 to 699 (QDLLAQLEAA…NMDEVSSVSV (128 aa)) is required for transcriptional activation.

It belongs to the ZXD family. As to quaternary structure, self-associates. Interacts with ZXDC and CIITA. As to expression, may be expressed in brain, heart, kidney, liver, lung, muscle and placenta.

It is found in the nucleus. Cooperates with CIITA to promote transcription of MHC class I and MHC class II genes. This is Zinc finger X-linked protein ZXDA (ZXDA) from Homo sapiens (Human).